An 89-amino-acid chain; its full sequence is Insulin (89 aa).

3 disulfide bridges follow: C7–C75, C19–C88, and C74–C79. A propeptide spans 33-66 (DVGPLSAFRDLEPPLDTEMEDRFPYRQQLAGSKM) (c peptide).

This sequence belongs to the insulin family. Heterodimer of a B chain and an A chain linked by two disulfide bonds.

The protein localises to the secreted. Its function is as follows. Insulin decreases blood glucose concentration. It increases cell permeability to monosaccharides, amino acids and fatty acids. It accelerates glycolysis, the pentose phosphate cycle, and glycogen synthesis in liver. This is Insulin (ins) from Callorhinchus milii (Ghost shark).